Reading from the N-terminus, the 440-residue chain is Actin-like protein 7A (440 aa).

Residues 1–29 are disordered; sequence MSLDGVWAPQTANIGDGPAKKASDQASMQ. A required for interaction with TES region spans residues 36–56; the sequence is ASLKDGPAKRAVWVRRDNAET.

This sequence belongs to the actin family. Interacts (via N-terminus) with TES (via LIM domain 2). Heterodimer with TES; the heterodimer interacts with ENAH to form a heterotrimer. Interacts with ACTL9. Interacts with CYLC1; the interaction may be relevant for proper acrosome attachment to the nuclear envelope. In terms of tissue distribution, detected in testis. Detected at the acrosome of round spermatids (at protein level). Detected in adult and embryonic testis. Detected in developing male germ cells.

It is found in the cytoplasm. The protein resides in the cytoskeleton. It localises to the golgi apparatus. Its subcellular location is the nucleus. The protein localises to the cytoplasmic vesicle. It is found in the secretory vesicle. The protein resides in the acrosome. In terms of biological role, essential for normal spermatogenesis and male fertility. Required for normal sperm head morphology, acroplaxome formation, acrosome attachment, and acrosome granule stability. May anchor and stabilize acrosomal adherence to the acroplaxome at least in part by facilitating the presence of F-actin in the subacrosomal space. May play an important role in formation and fusion of Golgi-derived vesicles during acrosome biogenesis. The polypeptide is Actin-like protein 7A (Actl7a) (Mus musculus (Mouse)).